The primary structure comprises 91 residues: Sec-independent protein translocase protein TatA (91 aa).

Residues 1–21 (MGIFDWKHWIVILIVVVLVFG) form a helical membrane-spanning segment. Residues 42–91 (AMNDDDKPAEQPAPQPQQAQAAPQGSPLNQPHTIDAQAHKVDEPIRKDQV) form a disordered region. The segment covering 51-65 (EQPAPQPQQAQAAPQ) has biased composition (low complexity). Positions 78-91 (QAHKVDEPIRKDQV) are enriched in basic and acidic residues.

The protein belongs to the TatA/E family. In terms of assembly, the Tat system comprises two distinct complexes: a TatABC complex, containing multiple copies of TatA, TatB and TatC subunits, and a separate TatA complex, containing only TatA subunits. Substrates initially bind to the TatABC complex, which probably triggers association of the separate TatA complex to form the active translocon.

It localises to the cell inner membrane. In terms of biological role, part of the twin-arginine translocation (Tat) system that transports large folded proteins containing a characteristic twin-arginine motif in their signal peptide across membranes. TatA could form the protein-conducting channel of the Tat system. The sequence is that of Sec-independent protein translocase protein TatA from Pseudomonas savastanoi pv. phaseolicola (strain 1448A / Race 6) (Pseudomonas syringae pv. phaseolicola (strain 1448A / Race 6)).